The chain runs to 187 residues: Probable nicotinate-nucleotide adenylyltransferase (187 aa).

The protein belongs to the NadD family.

The catalysed reaction is nicotinate beta-D-ribonucleotide + ATP + H(+) = deamido-NAD(+) + diphosphate. It functions in the pathway cofactor biosynthesis; NAD(+) biosynthesis; deamido-NAD(+) from nicotinate D-ribonucleotide: step 1/1. Functionally, catalyzes the reversible adenylation of nicotinate mononucleotide (NaMN) to nicotinic acid adenine dinucleotide (NaAD). The polypeptide is Probable nicotinate-nucleotide adenylyltransferase (Anaeromyxobacter sp. (strain K)).